A 355-amino-acid chain; its full sequence is Protein RecA (355 aa).

65 to 72 provides a ligand contact to ATP; sequence GPESSGKT. Residues 333 to 355 are disordered; sequence IEEKDEKQAEAEKNENTNLFDEE. Positions 336-347 are enriched in basic and acidic residues; it reads KDEKQAEAEKNE.

Belongs to the RecA family.

It is found in the cytoplasm. In terms of biological role, can catalyze the hydrolysis of ATP in the presence of single-stranded DNA, the ATP-dependent uptake of single-stranded DNA by duplex DNA, and the ATP-dependent hybridization of homologous single-stranded DNAs. It interacts with LexA causing its activation and leading to its autocatalytic cleavage. The protein is Protein RecA of Staphylococcus carnosus (strain TM300).